The primary structure comprises 220 residues: Casparian strip membrane protein 4 (220 aa).

Residues 1–39 are disordered; sequence MDSRREVEESSTAPILESKRTRSNGKGKSIDGDHSPPHA. The Cytoplasmic segment spans residues 1-60; sequence MDSRREVEESSTAPILESKRTRSNGKGKSIDGDHSPPHAATVVTTKATPLQKGGMKKGIA. A helical membrane pass occupies residues 61-81; that stretch reads ILDFILRLGAIGAALGAAVIM. Over 82–108 the chain is Extracellular; it reads GTNEQILPFFTQFLQFHAQWDDFPMFK. The chain crosses the membrane as a helical span at residues 109–129; the sequence is FFVVANGAAAGFLILSLPFSI. At 130 to 141 the chain is on the cytoplasmic side; that stretch reads VCIVRPLAAGPR. The helical transmembrane segment at 142–162 threads the bilayer; that stretch reads FLLVIVDLVLMALVVAAASSA. Residues 163–194 are Extracellular-facing; the sequence is AAVVYLAHNGSQDANWNAICQQFTDFCQGSSL. An N-linked (GlcNAc...) asparagine glycan is attached at N171. A helical transmembrane segment spans residues 195–215; that stretch reads AVVASFVASVFLACLVVVSSV. The Cytoplasmic segment spans residues 216–220; sequence ALKRT.

The protein belongs to the Casparian strip membrane proteins (CASP) family. As to quaternary structure, homodimer and heterodimers.

It localises to the cell membrane. Functionally, regulates membrane-cell wall junctions and localized cell wall deposition. Required for establishment of the Casparian strip membrane domain (CSD) and the subsequent formation of Casparian strips, a cell wall modification of the root endodermis that determines an apoplastic barrier between the intraorganismal apoplasm and the extraorganismal apoplasm and prevents lateral diffusion. This chain is Casparian strip membrane protein 4, found in Medicago truncatula (Barrel medic).